A 545-amino-acid polypeptide reads, in one-letter code: Acetyltransferase BOT5 (545 aa).

The N-terminal stretch at 1–19 (MATIPLFFSLILFLRLYHA) is a signal peptide. N-linked (GlcNAc...) asparagine glycosylation is found at N70 and N198. The active-site Proton acceptor is H208. Residues N346 and N445 are each glycosylated (N-linked (GlcNAc...) asparagine). The interval 466-493 (GAGNQKSSSTRKAARHTEPTQAQTQPGR) is disordered.

Belongs to the plant acyltransferase family.

It functions in the pathway secondary metabolite biosynthesis. Its function is as follows. Acetyltransferase; part of the gene cluster that mediates the biosynthesis of botrydial. Botrydial is necessary for colonization of plant tissue by the T4 strain. It is a strain-dependent virulence factor since highly aggressive strains like SAS56 or B05 still retain substantial virulence when botrydial synthesis is impaired, since they produce also botcinic acid. The first step of botrydial biosynthesis is performed by the sesquiterpene synthase BOT2 which catalyzes the cyclization of farnesyl diphosphate (FPP) to presilphiperfolan-8-beta-ol (PSP). The cytochrome P450 monooxygenase BOT4 then catalyzes the hydroxylation at C-4 to give a probotryane intermediate. Acetylation of the hydroxyl at C-4 is carried out by the acetyltransferase BOT5, followed by the combined action of the P450 monooxygenases BOT3 and BOT1, to yield finally the glycol, via the regio- and stereospecific hydroxylations at C-10 and C-15 of the probotryane intermediates, respectively. The cleavage of the C10-C15 bond of probotryane skeleton is an intriguing and chemically important reaction, which could be mediated by some of the monooxygenases or by a combination of them. It is possible that either BOT3 or BOT1 would oxidize either the 10- or the 15-hydroxy group to the hydroperoxide derivative, which would then undergo heterolytic fragmentation to give the dialdehyde botrydial. Finally, the dehydrogenase BOT7 might be involved in the conversion of botrydial to dihydrobotrydial. This chain is Acetyltransferase BOT5, found in Botryotinia fuckeliana (Noble rot fungus).